The chain runs to 494 residues: Hexokinase-2 (494 aa).

In terms of domain architecture, Hexokinase spans 32–483 (GRADAVLREL…SGIGAALLAA (452 aa)). Residues 87–225 (SGEEKGVFYA…GLDMKVTALI (139 aa)) are hexokinase small subdomain. Positions 101, 102, and 103 each coordinate ADP. Positions 191, 192, 226, and 227 each coordinate D-glucose. A hexokinase large subdomain region spans residues 226 to 472 (NDTIGTLAGG…STIVIKLAKD (247 aa)). T250 contacts ADP. The D-glucose site is built by N253, E281, and E312. G437 provides a ligand contact to ADP.

Belongs to the hexokinase family. Expressed in roots, leaves, flowers, immature seeds, endosperm and seed coat.

It carries out the reaction a D-hexose + ATP = a D-hexose 6-phosphate + ADP + H(+). The catalysed reaction is D-fructose + ATP = D-fructose 6-phosphate + ADP + H(+). It catalyses the reaction D-glucose + ATP = D-glucose 6-phosphate + ADP + H(+). The protein operates within carbohydrate metabolism; hexose metabolism. It participates in carbohydrate degradation; glycolysis; D-glyceraldehyde 3-phosphate and glycerone phosphate from D-glucose: step 1/4. Its function is as follows. Fructose and glucose phosphorylating enzyme. The sequence is that of Hexokinase-2 (HXK2) from Oryza sativa subsp. japonica (Rice).